The sequence spans 277 residues: Large ribosomal subunit protein uL2 (277 aa).

The disordered stretch occupies residues 219-277; that stretch reads TVRGSVMNPNDHPHGGGEGKAPVGRKAPSTPWGKPALGLKTRNKKAKSDKLIVRRRNEK. Positions 264–277 are enriched in basic and acidic residues; sequence AKSDKLIVRRRNEK.

It belongs to the universal ribosomal protein uL2 family. In terms of assembly, part of the 50S ribosomal subunit. Forms a bridge to the 30S subunit in the 70S ribosome.

In terms of biological role, one of the primary rRNA binding proteins. Required for association of the 30S and 50S subunits to form the 70S ribosome, for tRNA binding and peptide bond formation. It has been suggested to have peptidyltransferase activity; this is somewhat controversial. Makes several contacts with the 16S rRNA in the 70S ribosome. The protein is Large ribosomal subunit protein uL2 of Streptococcus pneumoniae serotype 2 (strain D39 / NCTC 7466).